Reading from the N-terminus, the 132-residue chain is Small ribosomal subunit protein uS8 (132 aa).

The protein belongs to the universal ribosomal protein uS8 family. As to quaternary structure, part of the 30S ribosomal subunit. Contacts proteins S5 and S12.

Its function is as follows. One of the primary rRNA binding proteins, it binds directly to 16S rRNA central domain where it helps coordinate assembly of the platform of the 30S subunit. This chain is Small ribosomal subunit protein uS8, found in Mycoplasmopsis pulmonis (strain UAB CTIP) (Mycoplasma pulmonis).